The sequence spans 393 residues: Phosphoglycerate kinase (393 aa).

Residues 22-24 (DFN), Arg-37, 60-63 (HLGR), Arg-119, and Arg-152 each bind substrate. ATP-binding positions include Lys-202, Gly-293, Glu-324, and 350–353 (GGDS).

The protein belongs to the phosphoglycerate kinase family. As to quaternary structure, monomer.

The protein resides in the cytoplasm. The enzyme catalyses (2R)-3-phosphoglycerate + ATP = (2R)-3-phospho-glyceroyl phosphate + ADP. It participates in carbohydrate degradation; glycolysis; pyruvate from D-glyceraldehyde 3-phosphate: step 2/5. In Borrelia garinii subsp. bavariensis (strain ATCC BAA-2496 / DSM 23469 / PBi) (Borreliella bavariensis), this protein is Phosphoglycerate kinase.